The following is a 351-amino-acid chain: Anthranilate phosphoribosyltransferase (351 aa).

Residues glycine 80, 83 to 84, threonine 88, 90 to 93, 108 to 116, and serine 120 each bind 5-phospho-alpha-D-ribose 1-diphosphate; these read GD, NIST, and KHGNRSVTS. Position 80 (glycine 80) interacts with anthranilate. A Mg(2+)-binding site is contributed by serine 92. Asparagine 111 provides a ligand contact to anthranilate. Position 166 (arginine 166) interacts with anthranilate. Residues aspartate 229 and glutamate 230 each coordinate Mg(2+).

This sequence belongs to the anthranilate phosphoribosyltransferase family. Homodimer. Mg(2+) is required as a cofactor.

It carries out the reaction N-(5-phospho-beta-D-ribosyl)anthranilate + diphosphate = 5-phospho-alpha-D-ribose 1-diphosphate + anthranilate. It functions in the pathway amino-acid biosynthesis; L-tryptophan biosynthesis; L-tryptophan from chorismate: step 2/5. Functionally, catalyzes the transfer of the phosphoribosyl group of 5-phosphorylribose-1-pyrophosphate (PRPP) to anthranilate to yield N-(5'-phosphoribosyl)-anthranilate (PRA). The polypeptide is Anthranilate phosphoribosyltransferase (Chlorobium chlorochromatii (strain CaD3)).